A 357-amino-acid polypeptide reads, in one-letter code: Olfactory receptor 2B2 (357 aa).

Residues 1–25 (MNWVNKSVPQEFILLVFSDQPWLEI) lie on the Extracellular side of the membrane. An N-linked (GlcNAc...) asparagine glycan is attached at asparagine 5. Residues 26–49 (PPFVMFLFSYILTIFGNLTIILVS) form a helical membrane-spanning segment. At 50–57 (HVDFKLHT) the chain is on the cytoplasmic side. A helical membrane pass occupies residues 58–79 (PMYFFLSNLSLLDLCYTTSTVP). Topologically, residues 80-100 (QMLVNICNTRKVISYGGCVAQ) are extracellular. Cysteines 97 and 189 form a disulfide. A helical membrane pass occupies residues 101–120 (LFIFLALGSTECLLLAVMCF). Over 121–139 (DRFVAICRPLHYSIIMHQR) the chain is Cytoplasmic. The helical transmembrane segment at 140–158 (LCFQLAAASWISGFSNSVL) threads the bilayer. Over 159–195 (QSTWTLKMPLCGHKEVDHFFCEVPALLKLSCVDTTAN) the chain is Extracellular. A helical transmembrane segment spans residues 196–219 (EAELFFISVLFLLIPVTLILISYA). Residues 220–236 (FIVQAVLRIQSAEGQRK) lie on the Cytoplasmic side of the membrane. The helical transmembrane segment at 237–259 (AFGTCGSHLIVVSLFYGTAISMY) threads the bilayer. The Extracellular segment spans residues 260–272 (LQPPSPSSKDRGK). Residues 273-292 (MVSLFCGIIAPMLNPLIYTL) form a helical membrane-spanning segment. Residues 293-357 (RNKEVKEAFK…YCNLPQRKFP (65 aa)) are Cytoplasmic-facing.

It belongs to the G-protein coupled receptor 1 family.

The protein resides in the cell membrane. Functionally, odorant receptor. The polypeptide is Olfactory receptor 2B2 (OR2B2) (Homo sapiens (Human)).